The sequence spans 361 residues: MGNIHIQTKSKEYDVHVGKEVLSNLTTIVQNMQPAVSNVMIISDEAVASLHLQTVIDALQVEQHVFSFVVPSGEKEKSFENFYAAHTSALENKLDRNSLILALGGGMIGDLAGFVAASFMRGIRFVQVPTTLLAHDSAVGGKVAINHPLGKNMIGAFHQPEAVVYHTPFLQSLPEKEWRSGYAEVIKHALIGDVELYHWLKEEVQTLADLHDEKLIHILTKAIPVKANVVSQDETEKGVRAHLNFGHTLGHALEKELGYGNITHGDGVAVGMLFAIFLSEQVYKVDLAYEDMKQWFLKYGYPKMPGDLNVERIVQLMKQDKKANAGAIHMVLMQEYGVVNVVSISDETVHIALEAFQKDMV.

NAD(+) is bound by residues 72 to 77, 130 to 131, lysine 142, and lysine 151; these read SGEKEK and TT. The Zn(2+) site is built by glutamate 184, histidine 247, and histidine 264.

Belongs to the sugar phosphate cyclases superfamily. Dehydroquinate synthase family. The cofactor is NAD(+). Requires Co(2+) as cofactor. Zn(2+) serves as cofactor.

It localises to the cytoplasm. It catalyses the reaction 7-phospho-2-dehydro-3-deoxy-D-arabino-heptonate = 3-dehydroquinate + phosphate. It participates in metabolic intermediate biosynthesis; chorismate biosynthesis; chorismate from D-erythrose 4-phosphate and phosphoenolpyruvate: step 2/7. Its function is as follows. Catalyzes the conversion of 3-deoxy-D-arabino-heptulosonate 7-phosphate (DAHP) to dehydroquinate (DHQ). The protein is 3-dehydroquinate synthase of Bacillus cereus (strain ATCC 14579 / DSM 31 / CCUG 7414 / JCM 2152 / NBRC 15305 / NCIMB 9373 / NCTC 2599 / NRRL B-3711).